Reading from the N-terminus, the 187-residue chain is Pumilio homolog 26 (187 aa).

The Pumilio 1; degenerate repeat unit spans residues 20–42 (VATEFLRVSNDVAELHKLSSKLT). The stretch at 43–78 (SDPYLFVEFVKTIRGFLSVQTALGLSGEIDTVFLQV) is one Pumilio 2; degenerate repeat. The Pumilio 3; degenerate repeat unit spans residues 79–116 (IKGWFPDLITETFSFLIVVRIINLFNKRANSKVYPDIL). The stretch at 117–154 (RRIGNNALYLTRNPLRGICLVEKAINVRDPDCTVFIAL) is one Pumilio 4; degenerate repeat. The Pumilio 5 repeat unit spans residues 155–187 (KLHSHYVELSFEELGSNIVEKLLSVGESGICGV).

It localises to the cytoplasm. Its function is as follows. Sequence-specific RNA-binding protein that regulates translation and mRNA stability by binding the 3'-UTR of target mRNAs. This Arabidopsis thaliana (Mouse-ear cress) protein is Pumilio homolog 26 (APUM26).